Here is a 163-residue protein sequence, read N- to C-terminus: Nucleotide-binding protein CJJ81176_0398 (163 aa).

This sequence belongs to the YajQ family.

Its function is as follows. Nucleotide-binding protein. This chain is Nucleotide-binding protein CJJ81176_0398, found in Campylobacter jejuni subsp. jejuni serotype O:23/36 (strain 81-176).